The chain runs to 906 residues: Serine-aspartate repeat-containing protein C (906 aa).

The first 50 residues, 1–50 (MNNKKTATNRKGMIPNRLNKFSIRKYSVGTASILVGTTLIFGLSGHEAKA), serve as a signal peptide directing secretion. The disordered stretch occupies residues 51 to 127 (AEHTNGELNQ…QPTKKNNDAT (77 aa)). The interval 51-486 (AEHTNGELNQ…GSSTANGDQK (436 aa)) is ligand binding A region. Composition is skewed to polar residues over residues 56–71 (GELN…PSEN) and 80–119 (RQQN…STQP). CNA-B domains are found at residues 487 to 597 (KYNL…YKTP) and 598 to 708 (KYSL…EEET). The disordered stretch occupies residues 669-881 (KQTGTNTTED…TGSENNGSNN (213 aa)). Acidic residues-rich tracts occupy residues 676–686 (TEDDKDADGGE) and 703–845 (YFEE…DSDS). Positions 869–873 (LPETG) match the LPXTG sorting signal motif. Thr872 carries the post-translational modification Pentaglycyl murein peptidoglycan amidated threonine. Residues 873–906 (GSENNGSNNATLFGGLFAALGSLLLFGRRKKQNK) constitute a propeptide, removed by sortase.

The protein belongs to the serine-aspartate repeat-containing protein (SDr) family. As to quaternary structure, homodimerizes; via N2-Domain. Interacts with host NRXN1; this interaction mediates bacterial attachment to host cells.

The protein localises to the secreted. It localises to the cell wall. Functionally, cell surface-associated calcium-binding protein which plays an important role in adhesion and pathogenesis. Mediates interactions with components of the extracellular matrix such as host NRXN1 to promote bacterial adhesion. The protein is Serine-aspartate repeat-containing protein C (sdrC) of Staphylococcus aureus (strain MRSA252).